We begin with the raw amino-acid sequence, 224 residues long: Phosphoribosylformylglycinamidine synthase subunit PurQ (224 aa).

Residues Phe-3–Ala-224 enclose the Glutamine amidotransferase type-1 domain. Cys-86 serves as the catalytic Nucleophile. Active-site residues include His-195 and Glu-197.

In terms of assembly, part of the FGAM synthase complex composed of 1 PurL, 1 PurQ and 2 PurS subunits.

Its subcellular location is the cytoplasm. It carries out the reaction N(2)-formyl-N(1)-(5-phospho-beta-D-ribosyl)glycinamide + L-glutamine + ATP + H2O = 2-formamido-N(1)-(5-O-phospho-beta-D-ribosyl)acetamidine + L-glutamate + ADP + phosphate + H(+). The catalysed reaction is L-glutamine + H2O = L-glutamate + NH4(+). It participates in purine metabolism; IMP biosynthesis via de novo pathway; 5-amino-1-(5-phospho-D-ribosyl)imidazole from N(2)-formyl-N(1)-(5-phospho-D-ribosyl)glycinamide: step 1/2. Its function is as follows. Part of the phosphoribosylformylglycinamidine synthase complex involved in the purines biosynthetic pathway. Catalyzes the ATP-dependent conversion of formylglycinamide ribonucleotide (FGAR) and glutamine to yield formylglycinamidine ribonucleotide (FGAM) and glutamate. The FGAM synthase complex is composed of three subunits. PurQ produces an ammonia molecule by converting glutamine to glutamate. PurL transfers the ammonia molecule to FGAR to form FGAM in an ATP-dependent manner. PurS interacts with PurQ and PurL and is thought to assist in the transfer of the ammonia molecule from PurQ to PurL. This Trichormus variabilis (strain ATCC 29413 / PCC 7937) (Anabaena variabilis) protein is Phosphoribosylformylglycinamidine synthase subunit PurQ.